We begin with the raw amino-acid sequence, 861 residues long: Leucine--tRNA ligase (861 aa).

A 'HIGH' region motif is present at residues 42 to 52; that stretch reads PYPSGNLHMGH. The 'KMSKS' region motif lies at 620-624; the sequence is KMSKS. Lys623 is a binding site for ATP.

It belongs to the class-I aminoacyl-tRNA synthetase family.

The protein resides in the cytoplasm. It carries out the reaction tRNA(Leu) + L-leucine + ATP = L-leucyl-tRNA(Leu) + AMP + diphosphate. This chain is Leucine--tRNA ligase, found in Baumannia cicadellinicola subsp. Homalodisca coagulata.